The following is a 412-amino-acid chain: NADH-quinone oxidoreductase subunit D (412 aa).

Belongs to the complex I 49 kDa subunit family. As to quaternary structure, NDH-1 is composed of 14 different subunits. Subunits NuoB, C, D, E, F, and G constitute the peripheral sector of the complex.

Its subcellular location is the cell inner membrane. The enzyme catalyses a quinone + NADH + 5 H(+)(in) = a quinol + NAD(+) + 4 H(+)(out). In terms of biological role, NDH-1 shuttles electrons from NADH, via FMN and iron-sulfur (Fe-S) centers, to quinones in the respiratory chain. The immediate electron acceptor for the enzyme in this species is believed to be ubiquinone. Couples the redox reaction to proton translocation (for every two electrons transferred, four hydrogen ions are translocated across the cytoplasmic membrane), and thus conserves the redox energy in a proton gradient. The sequence is that of NADH-quinone oxidoreductase subunit D from Sulfurimonas denitrificans (strain ATCC 33889 / DSM 1251) (Thiomicrospira denitrificans (strain ATCC 33889 / DSM 1251)).